The following is a 115-amino-acid chain: DNA-binding protein PH1060 (115 aa).

This sequence belongs to the PDCD5 family.

The protein is DNA-binding protein PH1060 of Pyrococcus horikoshii (strain ATCC 700860 / DSM 12428 / JCM 9974 / NBRC 100139 / OT-3).